Consider the following 416-residue polypeptide: Casein kinase I isoform epsilon (416 aa).

Residues 9-277 (YRLGRKIGSG…YLRQLFRNLF (269 aa)) enclose the Protein kinase domain. Residues 15-23 (IGSGSFGDI) and Lys38 each bind ATP. Residue Asp128 is the Proton acceptor of the active site. A compositionally biased stretch (basic and acidic residues) spans 301–318 (PEDVDRERREHEREERMG). Residues 301 to 416 (PEDVDRERRE…TSVPFDHLGK (116 aa)) are disordered. A phosphoserine mark is found at Ser343 and Ser354. Residues 351–365 (TPASRIQQTGNTSPR) are compositionally biased toward polar residues. The residue at position 362 (Thr362) is a Phosphothreonine. The residue at position 363 (Ser363) is a Phosphoserine. Arg382 is modified (omega-N-methylarginine). 3 positions are modified to phosphoserine: Ser389, Ser405, and Ser408.

It belongs to the protein kinase superfamily. CK1 Ser/Thr protein kinase family. Casein kinase I subfamily. Monomer. Component of the circadian core oscillator, which includes the CRY proteins, CLOCK, or NPAS2, ARTNL/BMAL1 or ARTNL2/BMAL2, CSNK1D and/or CSNK1E, TIMELESS and the PER proteins. Interacts with ANKRD6. Interacts with PER1. Interacts with DBNDD2, LRP5, LRP6 and SOCS3. Interacts with SNAI1 (via zinc fingers). Interacts with DDX3X; this interaction greatly enhances CSNK1E affinity for ATP and DVL2 phosphorylation, but inhibits DDX3X ATPase/helicase activity. In the presence of RNA, the interaction is decreased. Interacts with FAM83A, FAM83B, FAM83E and FAM83H (via DUF1669). Post-translationally, autophosphorylated. Partially dephosphorylated by PPP5C. May be dephosphorylated by PP1. Expressed in all tissues examined, including brain, heart, lung, liver, pancreas, kidney, placenta and skeletal muscle. Expressed in monocytes and lymphocytes but not in granulocytes.

It localises to the cytoplasm. The protein resides in the nucleus. It carries out the reaction L-seryl-[protein] + ATP = O-phospho-L-seryl-[protein] + ADP + H(+). The catalysed reaction is L-threonyl-[protein] + ATP = O-phospho-L-threonyl-[protein] + ADP + H(+). With respect to regulation, phosphorylation leads to a decrease in the catalytic activity. Functionally, casein kinases are operationally defined by their preferential utilization of acidic proteins such as caseins as substrates. Participates in Wnt signaling. Phosphorylates DVL1. Phosphorylates DVL2. Phosphorylates NEDD9/HEF1. Central component of the circadian clock. In balance with PP1, determines the circadian period length, through the regulation of the speed and rhythmicity of PER1 and PER2 phosphorylation. Controls PER1 and PER2 nuclear transport and degradation. Inhibits cytokine-induced granuloytic differentiation. The protein is Casein kinase I isoform epsilon (Csnk1e) of Mus musculus (Mouse).